A 592-amino-acid chain; its full sequence is Endoribonuclease Arlr (592 aa).

The N-terminal stretch at 1-24 is a signal peptide; it reads MRCLALSAVFLCLTLAGHFHLSDA. A disordered region spans residues 83–329; that stretch reads PTAANKPPPL…FQSSGNSVAT (247 aa). The segment covering 109–120 has biased composition (polar residues); that stretch reads PGSSPFGASQNP. 2 stretches are compositionally biased toward low complexity: residues 134 to 144 and 188 to 209; these read PSHPSQPSQPS and GISSTTSTTTTAKPITSTTGKT. Pro residues-rich tracts occupy residues 234–249 and 258–267; these read LPAPKTPPGSPTPTPG and LPTPQHPVHP. Low complexity predominate over residues 268-294; the sequence is PTKATSAATPTPTPTPSFSSSVTPTPA. The EndoU domain occupies 329 to 592; sequence TDDEIRQLTE…NLIGSAYPEI (264 aa). Residues histidine 473, histidine 488, and lysine 531 contribute to the active site.

It belongs to the ENDOU family. Monomer. Mn(2+) serves as cofactor. In terms of tissue distribution, predominantly expressed in head. Expressed in fat body cells.

It is found in the endoplasmic reticulum lumen. The protein resides in the secreted. The catalysed reaction is a ribonucleotidyl-ribonucleotide-RNA + H2O = a 3'-end 3'-phospho-ribonucleotide-RNA + a 5'-end dephospho-ribonucleoside-RNA + H(+). Its function is as follows. Endoribonuclease that cleaves single-stranded RNAs; unlike its paralog EndoU it does not appear to preferentially cleave at uridylates and releases linear products instead of products that have 2'-3'-cyclic phosphate termini. Preferentially cleaves single stranded RNA at sites with AU, UC and poly-U sites cleaved less efficiently. Targets mRNAs encoding proteins involved in lipid metabolism, particularly those involved in lipolysis, to regulate their expression. The sequence is that of Endoribonuclease Arlr from Drosophila melanogaster (Fruit fly).